A 160-amino-acid polypeptide reads, in one-letter code: Transcription antitermination protein NusB (160 aa).

It belongs to the NusB family.

Functionally, involved in transcription antitermination. Required for transcription of ribosomal RNA (rRNA) genes. Binds specifically to the boxA antiterminator sequence of the ribosomal RNA (rrn) operons. The chain is Transcription antitermination protein NusB from Chlamydia pneumoniae (Chlamydophila pneumoniae).